Here is a 404-residue protein sequence, read N- to C-terminus: Keratin, type I cuticular Ha3-II (404 aa).

The tract at residues 1 to 56 (MPYNFCLPSLSCRTSCSSRPCVPPSCHGYTLPGACNIPANVSNCNWFCEGSFNGSE) is head. The IF rod domain occupies 56–367 (EKETMQFLND…SLLESEDCKL (312 aa)). Positions 57–91 (KETMQFLNDRLASYLEKVRQLERDNAELENLIRER) are coil 1A. The interval 92–102 (SQQQEPLLCPS) is linker 1. The segment at 103–203 (YQSYFKTIEE…HEQEVNTLRC (101 aa)) is coil 1B. Positions 204–219 (QLGDRLNVEVDAAPAV) are linker 12. Positions 220–363 (DLNQVLNETR…NTYRSLLESE (144 aa)) are coil 2. The interval 364–404 (DCKLPSNPCATTNACEKPIGSCVTNPCGPRSRCGPCNTFGY) is tail.

The protein belongs to the intermediate filament family.

The protein is Keratin, type I cuticular Ha3-II (KRT33B) of Homo sapiens (Human).